The primary structure comprises 747 residues: Anoctamin-9 (747 aa).

Topologically, residues 1 to 193 (MQDDESSQIF…LYFTWLGWYT (193 aa)) are cytoplasmic. A helical membrane pass occupies residues 194-214 (YMLVPAAVVGLIVFLSGFALF). Residues 215 to 259 (DSSQISKEICSANDIFMCPLGDHSHRYLRLSEMCTFAKLTHLFDN) are Extracellular-facing. Ser245 bears the Phosphoserine; by PKA mark. Residues 260-280 (EGTVLFAIFMALWATVFLEIW) traverse the membrane as a helical segment. Residues 281–326 (KRKRAHEVQSWKLYEWDEEEEEMALELINSPHYKLKDHRHSYLSST) are Cytoplasmic-facing. The helical transmembrane segment at 327–347 (IILILSLFMICLMIGMAHVLV) threads the bilayer. Over 348-364 (VYRVLAGALFSSLVKQQ) the chain is Extracellular. Residues 365-385 (VTTAVVVTGAVVHYIIIVIMT) form a helical membrane-spanning segment. Topologically, residues 386–414 (KVNKYVALKLCKFEESGTFSEQERKFTVK) are cytoplasmic. The helical transmembrane segment at 415–435 (FFILQFFAHFSSLIYIAFILG) threads the bilayer. Over 436-543 (RINGHPGKST…EMMIQYGFTT (108 aa)) the chain is Extracellular. A helical transmembrane segment spans residues 544 to 564 (IFVAAFPLAPLLALFSNLVEI). The Cytoplasmic segment spans residues 565–595 (RLDAIKMVRLQRRLVPRKAKDIGTWLQVLET). The chain crosses the membrane as a helical span at residues 596–616 (IGVLAVIANGMVIAFTSEFIP). At 617 to 695 (RVVYKYHYGP…FWFILAIRLT (79 aa)) the chain is on the extracellular side. N-linked (GlcNAc...) asparagine glycans are attached at residues Asn630, Asn643, Asn665, and Asn681. Residues 696 to 716 (FVILFEHFALCIKLIAAWFVP) form a helical membrane-spanning segment. Residues 717–747 (DVPQKVKNEVLQEKYDRIRHRMRFSSRSTDV) lie on the Cytoplasmic side of the membrane.

This sequence belongs to the anoctamin family. Post-translationally, phosphorylation on Ser-245 by cAMP-dependent protein kinase A (PKA)is essential for activation of its cation channel activity. In terms of tissue distribution, highly expressed in the olfactory epithelium, particularly in mature olfactory sensory neurons (at protein level). Expressed in the kidney (at protein level). Predominant expression seen in epithelial tissues. Highly expressed in the small intestine, colon and stomach.

Its subcellular location is the cell membrane. The protein resides in the endoplasmic reticulum. The catalysed reaction is a 1,2-diacyl-sn-glycero-3-phospho-L-serine(in) = a 1,2-diacyl-sn-glycero-3-phospho-L-serine(out). It carries out the reaction a beta-D-galactosyl-(1&lt;-&gt;1')-N-acylsphing-4-enine(out) = a beta-D-galactosyl-(1&lt;-&gt;1')-N-acylsphing-4-enine(in). It catalyses the reaction a 1,2-diacyl-sn-glycero-3-phosphocholine(in) = a 1,2-diacyl-sn-glycero-3-phosphocholine(out). The enzyme catalyses Ca(2+)(in) = Ca(2+)(out). The catalysed reaction is Na(+)(in) = Na(+)(out). It carries out the reaction K(+)(in) = K(+)(out). With respect to regulation, cation channel activity is activated via phosphorylation on Ser-245 by cAMP-dependent protein kinase A (PKA). Inhibited by NaCl. In terms of biological role, PKA-activated nonselective cation channel. Discriminates poorly among cations but is more permeable to Ca(2+) ions than to monovalent cations. Acts as a calcium-activated calcium permeable channel which may operate as a endoplasmic reticulum (ER) Ca(2+)-leak channel, reducing the loading of the ER Ca(2+) store. Regulates intracellular Ca2+ signals, ion channel activity, and cytokine release in the renal tissue. Plays an important role in olfaction, amplifying cAMP-evoked cyclic nucleotide-gated (CNG) channel currents in the olfactory sensory neurons. Has calcium-dependent phospholipid scramblase activity; scrambles phosphatidylserine, phosphatidylcholine and galactosylceramide. Does not exhibit calcium-activated chloride channel (CaCC) activity. Can inhibit the activity of ANO1. This Mus musculus (Mouse) protein is Anoctamin-9.